Reading from the N-terminus, the 462-residue chain is 3-isopropylmalate dehydratase large subunit (462 aa).

3 residues coordinate [4Fe-4S] cluster: Cys-337, Cys-397, and Cys-400.

This sequence belongs to the aconitase/IPM isomerase family. LeuC type 1 subfamily. As to quaternary structure, heterodimer of LeuC and LeuD. Requires [4Fe-4S] cluster as cofactor.

The catalysed reaction is (2R,3S)-3-isopropylmalate = (2S)-2-isopropylmalate. It participates in amino-acid biosynthesis; L-leucine biosynthesis; L-leucine from 3-methyl-2-oxobutanoate: step 2/4. Catalyzes the isomerization between 2-isopropylmalate and 3-isopropylmalate, via the formation of 2-isopropylmaleate. The polypeptide is 3-isopropylmalate dehydratase large subunit (Listeria innocua serovar 6a (strain ATCC BAA-680 / CLIP 11262)).